The chain runs to 98 residues: MPLIYMNIMLAFTISLLGMLVYRSHLMSSLLCLEGMMLSLFIMTTLMTLNTHSLLANIVPITMLVFAACEAAVGLALLVSISNTYGLDYVHNLNLLQC.

The next 3 membrane-spanning stretches (helical) occupy residues 1–21 (MPLIYMNIMLAFTISLLGMLV), 29–49 (SLLCLEGMMLSLFIMTTLMTL), and 58–78 (IVPITMLVFAACEAAVGLALL).

This sequence belongs to the complex I subunit 4L family. As to quaternary structure, core subunit of respiratory chain NADH dehydrogenase (Complex I) which is composed of 45 different subunits.

The protein localises to the mitochondrion inner membrane. The enzyme catalyses a ubiquinone + NADH + 5 H(+)(in) = a ubiquinol + NAD(+) + 4 H(+)(out). Its function is as follows. Core subunit of the mitochondrial membrane respiratory chain NADH dehydrogenase (Complex I) which catalyzes electron transfer from NADH through the respiratory chain, using ubiquinone as an electron acceptor. Part of the enzyme membrane arm which is embedded in the lipid bilayer and involved in proton translocation. The sequence is that of NADH-ubiquinone oxidoreductase chain 4L (MT-ND4L) from Pan paniscus (Pygmy chimpanzee).